Here is a 290-residue protein sequence, read N- to C-terminus: Probable branched-chain-amino-acid aminotransferase (290 aa).

N6-(pyridoxal phosphate)lysine is present on Lys-155.

The protein belongs to the class-IV pyridoxal-phosphate-dependent aminotransferase family. It depends on pyridoxal 5'-phosphate as a cofactor.

It catalyses the reaction L-leucine + 2-oxoglutarate = 4-methyl-2-oxopentanoate + L-glutamate. The enzyme catalyses L-isoleucine + 2-oxoglutarate = (S)-3-methyl-2-oxopentanoate + L-glutamate. It carries out the reaction L-valine + 2-oxoglutarate = 3-methyl-2-oxobutanoate + L-glutamate. It participates in amino-acid biosynthesis; L-isoleucine biosynthesis; L-isoleucine from 2-oxobutanoate: step 4/4. It functions in the pathway amino-acid biosynthesis; L-leucine biosynthesis; L-leucine from 3-methyl-2-oxobutanoate: step 4/4. Its pathway is amino-acid biosynthesis; L-valine biosynthesis; L-valine from pyruvate: step 4/4. Its function is as follows. Acts on leucine, isoleucine and valine. The polypeptide is Probable branched-chain-amino-acid aminotransferase (ilvE) (Rickettsia conorii (strain ATCC VR-613 / Malish 7)).